The chain runs to 204 residues: MTAEQKVELAAKLEEQKIDLDKPEVEDDDDNDEDDSEDDDEAEGHDGEAGGRSKQSRSEKKSRKAMLKLGMKPITGVSRVTVKKSKNILFVISKPDVFKSPASDTYVIFGEAKIEDLSSQLQSQAAEQFKAPNLSNVISQGETSSAATAAAVQDDDDEEVDEEGVEPKDIELVMTQAGVSKPRAVKALKLANGDIVSAIMELTT.

The span at 1–23 shows a compositional bias: basic and acidic residues; sequence MTAEQKVELAAKLEEQKIDLDKP. 2 disordered regions span residues 1–68 and 141–165; these read MTAE…AMLK and GETS…EEGV. Residues 24–43 show a composition bias toward acidic residues; the sequence is EVEDDDDNDEDDSEDDDEAE. Ser-36 is subject to Phosphoserine. Positions 44–59 are enriched in basic and acidic residues; that stretch reads GHDGEAGGRSKQSRSE. In terms of domain architecture, NAC-A/B spans 56–121; the sequence is SRSEKKSRKA…AKIEDLSSQL (66 aa). Positions 141–152 are enriched in low complexity; the sequence is GETSSAATAAAV. The segment covering 153 to 164 has biased composition (acidic residues); sequence QDDDDEEVDEEG. Residues 159–204 enclose the UBA domain; the sequence is EVDEEGVEPKDIELVMTQAGVSKPRAVKALKLANGDIVSAIMELTT.

The protein belongs to the NAC-alpha family.

In terms of biological role, may promote appropriate targeting of ribosome-nascent polypeptide complexes. The chain is Nascent polypeptide-associated complex subunit alpha-like protein 3 from Arabidopsis thaliana (Mouse-ear cress).